We begin with the raw amino-acid sequence, 122 residues long: uncharacterized protein (122 aa).

The N-terminal stretch at 1-17 is a signal peptide; the sequence is MKYSSIFSMLSFFILFA.

This is an uncharacterized protein from Escherichia coli (strain K12).